The chain runs to 348 residues: Phosphoribosylformylglycinamidine cyclo-ligase (348 aa).

Belongs to the AIR synthase family.

Its subcellular location is the cytoplasm. It catalyses the reaction 2-formamido-N(1)-(5-O-phospho-beta-D-ribosyl)acetamidine + ATP = 5-amino-1-(5-phospho-beta-D-ribosyl)imidazole + ADP + phosphate + H(+). Its pathway is purine metabolism; IMP biosynthesis via de novo pathway; 5-amino-1-(5-phospho-D-ribosyl)imidazole from N(2)-formyl-N(1)-(5-phospho-D-ribosyl)glycinamide: step 2/2. In Geobacter metallireducens (strain ATCC 53774 / DSM 7210 / GS-15), this protein is Phosphoribosylformylglycinamidine cyclo-ligase.